The primary structure comprises 377 residues: Cytoplasmic tRNA 2-thiolation protein 1 (377 aa).

The protein belongs to the TtcA family. CTU1/NCS6/ATPBD3 subfamily.

The protein localises to the cytoplasm. Its pathway is tRNA modification; 5-methoxycarbonylmethyl-2-thiouridine-tRNA biosynthesis. In terms of biological role, plays a central role in 2-thiolation of mcm(5)S(2)U at tRNA wobble positions of tRNA(Lys), tRNA(Glu) and tRNA(Gln). Directly binds tRNAs and probably acts by catalyzing adenylation of tRNAs, an intermediate required for 2-thiolation. It is unclear whether it acts as a sulfurtransferase that transfers sulfur from thiocarboxylated URM1 onto the uridine of tRNAs at wobble position. Prior mcm(5) tRNA modification by the elongator complex is required for 2-thiolation. May also be involved in protein urmylation. The chain is Cytoplasmic tRNA 2-thiolation protein 1 from Debaryomyces hansenii (strain ATCC 36239 / CBS 767 / BCRC 21394 / JCM 1990 / NBRC 0083 / IGC 2968) (Yeast).